Here is a 145-residue protein sequence, read N- to C-terminus: Flagellar assembly factor FliW (145 aa).

It belongs to the FliW family. In terms of assembly, interacts with translational regulator CsrA and flagellin(s).

Its subcellular location is the cytoplasm. Acts as an anti-CsrA protein, binds CsrA and prevents it from repressing translation of its target genes, one of which is flagellin. Binds to flagellin and participates in the assembly of the flagellum. In Clostridium tetani (strain Massachusetts / E88), this protein is Flagellar assembly factor FliW.